The following is a 664-amino-acid chain: DNA ligase (664 aa).

NAD(+) is bound by residues 32 to 36 and 80 to 81; these read DKEYD and SL. Catalysis depends on Lys122, which acts as the N6-AMP-lysine intermediate. 3 residues coordinate NAD(+): Arg144, Glu178, and Lys314. Positions 407, 410, 423, and 429 each coordinate Zn(2+). Residues 587–664 form the BRCT domain; that stretch reads IDENPFMDKT…NEEEFSNKIK (78 aa).

This sequence belongs to the NAD-dependent DNA ligase family. LigA subfamily. It depends on Mg(2+) as a cofactor. Mn(2+) is required as a cofactor.

The catalysed reaction is NAD(+) + (deoxyribonucleotide)n-3'-hydroxyl + 5'-phospho-(deoxyribonucleotide)m = (deoxyribonucleotide)n+m + AMP + beta-nicotinamide D-nucleotide.. Functionally, DNA ligase that catalyzes the formation of phosphodiester linkages between 5'-phosphoryl and 3'-hydroxyl groups in double-stranded DNA using NAD as a coenzyme and as the energy source for the reaction. It is essential for DNA replication and repair of damaged DNA. In Clostridium botulinum (strain ATCC 19397 / Type A), this protein is DNA ligase.